We begin with the raw amino-acid sequence, 624 residues long: Aliphatic sulfonate oxidoreductase, WOR-like subunit (624 aa).

The tungstopterin site is built by Lys-77, Ser-93, Val-94, Ser-96, His-195, Ala-196, Gly-198, and Tyr-199. [4Fe-4S] cluster is bound by residues Asp-299, Cys-302, and Cys-306. Positions 353, 357, 358, 359, 470, 490, 494, 495, and 496 each coordinate tungstopterin. Cys-495 provides a ligand contact to [4Fe-4S] cluster. The segment at 552 to 575 (KDDDNPPRFYEPLPSGPVKGKAPN) is disordered.

The protein belongs to the AOR/FOR family. Heterodimer composed of a small WOR5-S subunit, with four [4Fe-4S] clusters, and a large WOR5-L subunit, containing the active site tungsto-bispyranopterin cofactor as well as another [4Fe-4S] cluster. Requires [4Fe-4S] cluster as cofactor. It depends on tungstopterin as a cofactor.

Its subcellular location is the cytoplasm. The catalysed reaction is an aliphatic sulfonate + 4 oxidized [4Fe-4S]-[ferredoxin] + 2 H2O = 4 reduced [4Fe-4S]-[ferredoxin] + a carboxylate + sulfite + 6 H(+). The enzyme catalyses an aliphatic sulfonate + 2 oxidized [4Fe-4S]-[ferredoxin] + H2O = 2 reduced [4Fe-4S]-[ferredoxin] + an aldehyde + sulfite + 3 H(+). It catalyses the reaction 2 oxidized [4Fe-4S]-[ferredoxin] + an aldehyde + H2O = 2 reduced [4Fe-4S]-[ferredoxin] + a carboxylate + 3 H(+). It carries out the reaction 4 oxidized [4Fe-4S]-[ferredoxin] + taurine + 2 H2O = 4 reduced [4Fe-4S]-[ferredoxin] + sulfite + glycine + 6 H(+). The catalysed reaction is 2 oxidized [4Fe-4S]-[ferredoxin] + taurine + H2O = aminoacetaldehyde + 2 reduced [4Fe-4S]-[ferredoxin] + sulfite + 3 H(+). The enzyme catalyses aminoacetaldehyde + 2 oxidized [4Fe-4S]-[ferredoxin] + H2O = 2 reduced [4Fe-4S]-[ferredoxin] + glycine + 3 H(+). Its function is as follows. WOR-like catalytic subunit of an oxidoreductase that can desulfonate and oxidize aliphatic sulfonates such as taurine. The activity involves two steps: an oxidative desulfonation reaction, followed by the activation of a second water molecule and oxidation of the resulting aldehyde. May be involved in the oxidation of various aliphatic sulfonates and also phosphonates. In vitro, has a broad substrate specificity with a high affinity for several substituted and nonsubstituted aliphatic and aromatic aldehydes with various chain lengths, with methyl viologen or benzyl viologen as electron acceptor. Ferredoxin is the physiological electron acceptor. The sequence is that of Aliphatic sulfonate oxidoreductase, WOR-like subunit from Pyrococcus furiosus (strain ATCC 43587 / DSM 3638 / JCM 8422 / Vc1).